The sequence spans 247 residues: tRNA pseudouridine synthase A (247 aa).

Catalysis depends on Asp53, which acts as the Nucleophile. Residue Tyr111 participates in substrate binding.

It belongs to the tRNA pseudouridine synthase TruA family. In terms of assembly, homodimer.

It carries out the reaction uridine(38/39/40) in tRNA = pseudouridine(38/39/40) in tRNA. In terms of biological role, formation of pseudouridine at positions 38, 39 and 40 in the anticodon stem and loop of transfer RNAs. This chain is tRNA pseudouridine synthase A, found in Bacillus subtilis (strain 168).